We begin with the raw amino-acid sequence, 205 residues long: Holliday junction branch migration complex subunit RuvA (205 aa).

The interval 1 to 64 (MIGKLKGVVD…EDQIRLFGFS (64 aa)) is domain I. Residues 65–143 (SAAERDWFRL…GFSASEPLAA (79 aa)) form a domain II region. A flexible linker region spans residues 144–152 (QLGGGGVAS). A domain III region spans residues 153–205 (AQGGAAADAVSALVNLGYGVPQANAAIAAALRGAGEGAKTEVLIRLGLKELAK).

It belongs to the RuvA family. As to quaternary structure, homotetramer. Forms an RuvA(8)-RuvB(12)-Holliday junction (HJ) complex. HJ DNA is sandwiched between 2 RuvA tetramers; dsDNA enters through RuvA and exits via RuvB. An RuvB hexamer assembles on each DNA strand where it exits the tetramer. Each RuvB hexamer is contacted by two RuvA subunits (via domain III) on 2 adjacent RuvB subunits; this complex drives branch migration. In the full resolvosome a probable DNA-RuvA(4)-RuvB(12)-RuvC(2) complex forms which resolves the HJ.

It is found in the cytoplasm. Functionally, the RuvA-RuvB-RuvC complex processes Holliday junction (HJ) DNA during genetic recombination and DNA repair, while the RuvA-RuvB complex plays an important role in the rescue of blocked DNA replication forks via replication fork reversal (RFR). RuvA specifically binds to HJ cruciform DNA, conferring on it an open structure. The RuvB hexamer acts as an ATP-dependent pump, pulling dsDNA into and through the RuvAB complex. HJ branch migration allows RuvC to scan DNA until it finds its consensus sequence, where it cleaves and resolves the cruciform DNA. This is Holliday junction branch migration complex subunit RuvA from Xanthobacter autotrophicus (strain ATCC BAA-1158 / Py2).